A 117-amino-acid chain; its full sequence is MLASYCHVNRPFARKIPSLSAIIFESIDNDKKSKFMLDLQNRHGSLIDFKMSIEEYKMVHYSNIYVLIMLEITRFDRFLDKDDTQKLEYIAKQDDDCEFYKAIYQCNFKHGDIYAYG.

The protein belongs to the mimivirus R69 family.

This is an uncharacterized protein from Acanthamoeba polyphaga mimivirus (APMV).